The following is a 345-amino-acid chain: Anthranilate phosphoribosyltransferase (345 aa).

5-phospho-alpha-D-ribose 1-diphosphate is bound by residues Gly84, 87–88, Thr92, 94–97, 112–120, and Ser124; these read GD, NIST, and KHGNRSVSS. Gly84 is an anthranilate binding site. A Mg(2+)-binding site is contributed by Ser96. Asn115 serves as a coordination point for anthranilate. Arg170 is a binding site for anthranilate. The Mg(2+) site is built by Asp229 and Glu230.

Belongs to the anthranilate phosphoribosyltransferase family. In terms of assembly, homodimer. Mg(2+) serves as cofactor.

It carries out the reaction N-(5-phospho-beta-D-ribosyl)anthranilate + diphosphate = 5-phospho-alpha-D-ribose 1-diphosphate + anthranilate. It participates in amino-acid biosynthesis; L-tryptophan biosynthesis; L-tryptophan from chorismate: step 2/5. Functionally, catalyzes the transfer of the phosphoribosyl group of 5-phosphorylribose-1-pyrophosphate (PRPP) to anthranilate to yield N-(5'-phosphoribosyl)-anthranilate (PRA). This chain is Anthranilate phosphoribosyltransferase, found in Xanthomonas axonopodis pv. citri (strain 306).